The following is a 142-amino-acid chain: Large ribosomal subunit protein uL13 (142 aa).

Belongs to the universal ribosomal protein uL13 family. As to quaternary structure, part of the 50S ribosomal subunit.

This protein is one of the early assembly proteins of the 50S ribosomal subunit, although it is not seen to bind rRNA by itself. It is important during the early stages of 50S assembly. In Teredinibacter turnerae (strain ATCC 39867 / T7901), this protein is Large ribosomal subunit protein uL13.